We begin with the raw amino-acid sequence, 476 residues long: CBL-interacting protein kinase 30 (476 aa).

In terms of domain architecture, Protein kinase spans 17-272 (YKLGRLLGRG…ISKIMDRPWF (256 aa)). ATP contacts are provided by residues 23–31 (LGRGTFAKV) and K46. The Proton acceptor role is filled by D140. Residues 158-187 (DFGLSALDGGLRGDGLLHTTCGTPAYVAPE) are activation loop. Residues 296–315 (KEASQQHDDEEDDGFAREKK) are disordered. Positions 299–353 (SQQHDDEEDDGFAREKKKRSNVIMSSPVIDVRPSSMNAFDIISRSRGLDLSKMFD) constitute an NAF domain. Residues 358-387 (RSEARFSTRETTTAIVSKLEEIAEAGRFSF) are PPI.

This sequence belongs to the protein kinase superfamily. CAMK Ser/Thr protein kinase family. SNF1 subfamily. It depends on Mn(2+) as a cofactor.

The catalysed reaction is L-seryl-[protein] + ATP = O-phospho-L-seryl-[protein] + ADP + H(+). It catalyses the reaction L-threonyl-[protein] + ATP = O-phospho-L-threonyl-[protein] + ADP + H(+). Functionally, CIPK serine-threonine protein kinases interact with CBL proteins. Binding of a CBL protein to the regulatory NAF domain of CIPK protein lead to the activation of the kinase in a calcium-dependent manner. The chain is CBL-interacting protein kinase 30 (CIPK30) from Oryza sativa subsp. japonica (Rice).